The following is a 101-amino-acid chain: DNA-binding protein Fis (101 aa).

The H-T-H motif DNA-binding region spans 77–96 (QTRAANMLGINRGTLRKKLK).

This sequence belongs to the transcriptional regulatory Fis family. In terms of assembly, homodimer.

Activates ribosomal RNA transcription. Plays a direct role in upstream activation of rRNA promoters. The polypeptide is DNA-binding protein Fis (Shewanella amazonensis (strain ATCC BAA-1098 / SB2B)).